Here is a 46-residue protein sequence, read N- to C-terminus: Large ribosomal subunit protein bL34 (46 aa).

This sequence belongs to the bacterial ribosomal protein bL34 family.

The polypeptide is Large ribosomal subunit protein bL34 (Trichodesmium erythraeum (strain IMS101)).